The chain runs to 105 residues: Plastocyanin (105 aa).

Residues 1 to 105 form the Plastocyanin-like domain; that stretch reads ETYTVKLGSD…GMVGKITVAG (105 aa). His39, Cys89, His92, and Met97 together coordinate Cu(2+).

The protein belongs to the plastocyanin family. It depends on Cu(2+) as a cofactor.

It localises to the cellular thylakoid membrane. In terms of biological role, participates in electron transfer between P700 and the cytochrome b6-f complex in photosystem I. The chain is Plastocyanin (petE) from Anabaena variabilis.